The following is a 130-amino-acid chain: Small ribosomal subunit protein uS11 (130 aa).

Belongs to the universal ribosomal protein uS11 family. As to quaternary structure, part of the 30S ribosomal subunit. Interacts with proteins S7 and S18. Binds to IF-3.

Functionally, located on the platform of the 30S subunit, it bridges several disparate RNA helices of the 16S rRNA. Forms part of the Shine-Dalgarno cleft in the 70S ribosome. The sequence is that of Small ribosomal subunit protein uS11 from Microcystis aeruginosa (strain NIES-843 / IAM M-2473).